The chain runs to 143 residues: Large ribosomal subunit protein uL11 (143 aa).

This sequence belongs to the universal ribosomal protein uL11 family. As to quaternary structure, part of the ribosomal stalk of the 50S ribosomal subunit. Interacts with L10 and the large rRNA to form the base of the stalk. L10 forms an elongated spine to which L12 dimers bind in a sequential fashion forming a multimeric L10(L12)X complex. Post-translationally, one or more lysine residues are methylated.

Its function is as follows. Forms part of the ribosomal stalk which helps the ribosome interact with GTP-bound translation factors. The sequence is that of Large ribosomal subunit protein uL11 from Treponema denticola (strain ATCC 35405 / DSM 14222 / CIP 103919 / JCM 8153 / KCTC 15104).